Reading from the N-terminus, the 393-residue chain is Na(+)/H(+) antiporter NhaA (393 aa).

Transmembrane regions (helical) follow at residues 18 to 38 (AGGV…NSPW), 65 to 85 (MLIW…GLEI), 101 to 121 (MLPA…YAAI), 131 to 151 (GWGI…VLLG), 160 to 180 (VFLT…IAFF), 184 to 204 (NLSP…LGLN), 210 to 230 (AVGP…KSGI), 260 to 280 (ALQP…NAGV), 298 to 318 (IAFG…WLLI), 334 to 354 (FFGV…IGSL), and 369 to 389 (IGVL…LLAS).

It belongs to the NhaA Na(+)/H(+) (TC 2.A.33) antiporter family.

It is found in the cell inner membrane. It carries out the reaction Na(+)(in) + 2 H(+)(out) = Na(+)(out) + 2 H(+)(in). Functionally, na(+)/H(+) antiporter that extrudes sodium in exchange for external protons. This is Na(+)/H(+) antiporter NhaA from Albidiferax ferrireducens (strain ATCC BAA-621 / DSM 15236 / T118) (Rhodoferax ferrireducens).